Here is a 428-residue protein sequence, read N- to C-terminus: C4-dicarboxylate transport protein (428 aa).

Helical transmembrane passes span 4-24 (SLFK…ILLG), 44-64 (LIKM…IAGM), 76-96 (VALL…LIIV), 142-162 (IGAF…MFGF), 184-204 (VIFG…FGAM), 222-242 (LIVC…GSIA), 289-309 (VVGL…SIYL), 326-346 (IFHQ…AAGV), and 352-372 (IVLA…LALI).

The protein belongs to the dicarboxylate/amino acid:cation symporter (DAACS) (TC 2.A.23) family.

It is found in the cell inner membrane. Functionally, responsible for the transport of dicarboxylates such as succinate, fumarate, and malate from the periplasm across the membrane. The chain is C4-dicarboxylate transport protein from Citrobacter koseri (strain ATCC BAA-895 / CDC 4225-83 / SGSC4696).